The following is a 296-amino-acid chain: Nucleotide-binding protein SEQ_0857 (296 aa).

13-20 (GMSGAGKT) contacts ATP. Position 63-66 (63-66 (DMRS)) interacts with GTP.

Belongs to the RapZ-like family.

Displays ATPase and GTPase activities. The protein is Nucleotide-binding protein SEQ_0857 of Streptococcus equi subsp. equi (strain 4047).